The following is a 91-amino-acid chain: Elongation factor 1-beta (91 aa).

It belongs to the EF-1-beta/EF-1-delta family.

In terms of biological role, promotes the exchange of GDP for GTP in EF-1-alpha/GDP, thus allowing the regeneration of EF-1-alpha/GTP that could then be used to form the ternary complex EF-1-alpha/GTP/AAtRNA. In Pyrococcus furiosus (strain ATCC 43587 / DSM 3638 / JCM 8422 / Vc1), this protein is Elongation factor 1-beta.